The primary structure comprises 266 residues: 3-methyl-2-oxobutanoate hydroxymethyltransferase (266 aa).

Residues aspartate 45 and aspartate 84 each contribute to the Mg(2+) site. 3-methyl-2-oxobutanoate contacts are provided by residues 45 to 46, aspartate 84, and lysine 112; that span reads DS. Residue glutamate 114 coordinates Mg(2+). The Proton acceptor role is filled by glutamate 181.

It belongs to the PanB family. In terms of assembly, homodecamer; pentamer of dimers. Requires Mg(2+) as cofactor.

The protein localises to the cytoplasm. The catalysed reaction is 3-methyl-2-oxobutanoate + (6R)-5,10-methylene-5,6,7,8-tetrahydrofolate + H2O = 2-dehydropantoate + (6S)-5,6,7,8-tetrahydrofolate. It functions in the pathway cofactor biosynthesis; (R)-pantothenate biosynthesis; (R)-pantoate from 3-methyl-2-oxobutanoate: step 1/2. Functionally, catalyzes the reversible reaction in which hydroxymethyl group from 5,10-methylenetetrahydrofolate is transferred onto alpha-ketoisovalerate to form ketopantoate. This chain is 3-methyl-2-oxobutanoate hydroxymethyltransferase, found in Pseudomonas savastanoi pv. phaseolicola (strain 1448A / Race 6) (Pseudomonas syringae pv. phaseolicola (strain 1448A / Race 6)).